The chain runs to 83 residues: Cytochrome c oxidase subunit 7A2, mitochondrial (83 aa).

A mitochondrion-targeting transit peptide spans 1–23 (MLRNLLALRQIGQRTISTASRRH). The Mitochondrial matrix portion of the chain corresponds to 24 to 48 (FKNKVPEKQKLFQEDDEIPLYLKGG). At K33 the chain carries N6-acetyllysine. A helical membrane pass occupies residues 49-77 (VADALLYRATMILTVGGTAYAIYELAVAS). Topologically, residues 78 to 83 (FPKKQE) are mitochondrial intermembrane.

It belongs to the cytochrome c oxidase VIIa family. Component of the cytochrome c oxidase (complex IV, CIV), a multisubunit enzyme composed of 14 subunits. The complex is composed of a catalytic core of 3 subunits MT-CO1, MT-CO2 and MT-CO3, encoded in the mitochondrial DNA, and 11 supernumerary subunits COX4I1 (or COX4I2), COX5A, COX5B, COX6A1 (or COX6A2), COX6B1 (or COX6B2), COX6C, COX7A2 (or COX7A1), COX7B, COX7C, COX8A and NDUFA4, which are encoded in the nuclear genome. The complex exists as a monomer or a dimer and forms supercomplexes (SCs) in the inner mitochondrial membrane with NADH-ubiquinone oxidoreductase (complex I, CI) and ubiquinol-cytochrome c oxidoreductase (cytochrome b-c1 complex, complex III, CIII), resulting in different assemblies (supercomplex SCI(1)III(2)IV(1) and megacomplex MCI(2)III(2)IV(2)). Interacts with PET100.

The protein resides in the mitochondrion inner membrane. The protein operates within energy metabolism; oxidative phosphorylation. Its function is as follows. Component of the cytochrome c oxidase, the last enzyme in the mitochondrial electron transport chain which drives oxidative phosphorylation. The respiratory chain contains 3 multisubunit complexes succinate dehydrogenase (complex II, CII), ubiquinol-cytochrome c oxidoreductase (cytochrome b-c1 complex, complex III, CIII) and cytochrome c oxidase (complex IV, CIV), that cooperate to transfer electrons derived from NADH and succinate to molecular oxygen, creating an electrochemical gradient over the inner membrane that drives transmembrane transport and the ATP synthase. Cytochrome c oxidase is the component of the respiratory chain that catalyzes the reduction of oxygen to water. Electrons originating from reduced cytochrome c in the intermembrane space (IMS) are transferred via the dinuclear copper A center (CU(A)) of subunit 2 and heme A of subunit 1 to the active site in subunit 1, a binuclear center (BNC) formed by heme A3 and copper B (CU(B)). The BNC reduces molecular oxygen to 2 water molecules using 4 electrons from cytochrome c in the IMS and 4 protons from the mitochondrial matrix. In Homo sapiens (Human), this protein is Cytochrome c oxidase subunit 7A2, mitochondrial (COX7A2).